Consider the following 911-residue polypeptide: Disks large homolog 1 (911 aa).

Positions 4–64 (RKQDTQRALH…FYEVTLLDNP (61 aa)) constitute an L27 domain. A Phosphoserine; by CaMK2 modification is found at Ser-39. A disordered region spans residues 70–105 (SKQCEPVQPGNPWESGSLSSAAVTSESLPGGLSPPV). Residues 83–96 (ESGSLSSAAVTSES) show a composition bias toward polar residues. Residues Ser-122, Ser-138, and Ser-158 each carry the phosphoserine modification. The interaction with SH3 domains stretch occupies residues 162–212 (PTEAVPPSSPIVPVTPALPVPAESPVVLPSTPQANPPPVLVNTDSLETPTY). 2 consecutive PDZ domains span residues 224–310 (EITL…VKRR) and 318–404 (EIKL…AAKP). The required for interaction with MARCHF2 stretch occupies residues 224-545 (EITLERGNSG…QAVTIVAQYR (322 aa)). A Phosphoserine; by CaMK2 modification is found at Ser-232. The residue at position 398 (Tyr-398) is a Phosphotyrosine. Over residues 419–441 (TNSSSQSVDNHVSPSSYLGQTPA) the composition is skewed to polar residues. The interval 419–443 (TNSSSQSVDNHVSPSSYLGQTPASP) is disordered. The PDZ 3 domain occupies 465–545 (KVVLHRGSTG…QAVTIVAQYR (81 aa)). 9 positions are modified to phosphoserine: Ser-567, Ser-572, Ser-574, Ser-578, Ser-597, Ser-618, Ser-684, Ser-687, and Ser-841. One can recognise an SH3 domain in the interval 580-650 (KRSLYVRALF…PSKRRVEKKE (71 aa)). Residues 662 to 696 (KTRGDKGEIPDDMGSKGLKHVTSNASDSESSYHEY) are disordered. The region spanning 721-896 (TRPVIILGPM…IYNQVKQIIE (176 aa)) is the Guanylate kinase-like domain.

The protein belongs to the MAGUK family. In terms of assembly, homotetramer. Interacts (via guanylate kinase-like domain) with DLGAP1, DLGAP2, DLGAP3, DLGAP4 and MAP1A. Interacts (via guanylate kinase-like domain) with KIF13B. May interact with HTR2A. Interacts (via PDZ domains) with GRIA1. Interacts (via PDZ domains) with GRIN2A. Interacts (via PDZ domains) with KCND2 and KCND3. Interacts (via PDZ domains) with KCNA1, KCNA2, KCNA3 and KCNA4. Interacts (via PDZ domains) with ADGRA3. Interacts with KCNF1. Interacts with CAMK2. Interacts with cytoskeleton-associated protein EPB41. Interacts with cytoskeleton-associated protein EZR. Found in a complex with KCNA5 and CAV3. Found in a complex with APC and CTNNB1. Interacts (via PDZ domains) with APC. Interacts with CDH1 through binding to PIK3R1. Forms multiprotein complexes with CASK, LIN7A, LIN7B, LIN7C, APBA1, and KCNJ12. Interacts with TOPK. Forms a tripartite complex composed of DLG1, MPP7 and LIN7 (LIN7A or LIN7C). May interact with TJAP1. Interacts with PTEN. Interacts with FRMPD4 (via C-terminus). Interacts with LRFN1 and LRFN2. Interacts with LRFN4 and SFPQ. Interacts (via PDZ domains) with ADGRA2 (via PDZ-binding motif). Interacts with ADAM10; this interaction recruits ADAM10 to the cell membrane during long-term depression in hippocampal neurons. Interacts with DGKI (via PDZ-binding motif). Interacts (via PDZ domains) with MARCHF2 (via PDZ domain); the interaction leads to DLG1 ubiqtuitination and degradation. Interacts (via N-terminus) with MPP3; this interaction connects CADM1 with DLG1 and links CADM1 with the regulatory subunit of phosphoinositide-3-kinase (PI3K) by forming a multiprotein complex and participates in cell spreading. In terms of processing, phosphorylated by MAPK12. Phosphorylation of Ser-39 modulates transport to the plasma membrane. Phosphorylation of Ser-232 regulates association with GRIN2A. Post-translationally, ubiquitinated; by MARCHF2 which results in its degradation. Widely expressed. Strongly expressed in epithelial cells, in the small intestine it is only detected in the vili. Expressed in brain, heart (at protein level), muscle, lung and liver. In the brain it was detected in olfactory bulbs, cerebral cortex, hippocampus, and spinal cord (at protein level).

It localises to the cell membrane. The protein resides in the basolateral cell membrane. It is found in the endoplasmic reticulum membrane. The protein localises to the postsynaptic density. Its subcellular location is the synapse. It localises to the sarcolemma. The protein resides in the cell junction. It is found in the cytoplasm. The protein localises to the apical cell membrane. In terms of biological role, essential multidomain scaffolding protein required for normal development. Recruits channels, receptors and signaling molecules to discrete plasma membrane domains in polarized cells. Promotes epithelial cell layer barrier function via maintaining cell-cell adhesion. May play a role in adherens junction assembly, signal transduction, cell proliferation, synaptogenesis and lymphocyte activation. Regulates the excitability of cardiac myocytes by modulating the functional expression of Kv4 channels. Functional regulator of Kv1.5 channel. During long-term depression in hippocampal neurons, it recruits ADAM10 to the plasma membrane. In Rattus norvegicus (Rat), this protein is Disks large homolog 1.